Reading from the N-terminus, the 469-residue chain is Soluble pyridine nucleotide transhydrogenase (469 aa).

39–48 (ERENSVGGGC) is a binding site for FAD.

This sequence belongs to the class-I pyridine nucleotide-disulfide oxidoreductase family. Requires FAD as cofactor.

Its subcellular location is the cytoplasm. It catalyses the reaction NAD(+) + NADPH = NADH + NADP(+). Conversion of NADPH, generated by peripheral catabolic pathways, to NADH, which can enter the respiratory chain for energy generation. The sequence is that of Soluble pyridine nucleotide transhydrogenase from Photobacterium profundum (strain SS9).